The sequence spans 327 residues: Ribosomal RNA large subunit methyltransferase F (327 aa).

The tract at residues 1-31 is disordered; that stretch reads MTHPVTPKNTTRPTPANKPAASTLHPRNPHQ.

It belongs to the methyltransferase superfamily. METTL16/RlmF family.

It is found in the cytoplasm. It carries out the reaction adenosine(1618) in 23S rRNA + S-adenosyl-L-methionine = N(6)-methyladenosine(1618) in 23S rRNA + S-adenosyl-L-homocysteine + H(+). Specifically methylates the adenine in position 1618 of 23S rRNA. The polypeptide is Ribosomal RNA large subunit methyltransferase F (Psychrobacter sp. (strain PRwf-1)).